The chain runs to 403 residues: Eukaryotic initiation factor 4A (403 aa).

A disordered region spans residues 1–20 (MDDRNEIPQDGPASMEPEGV). The Q motif signature appears at 30 to 58 (DNFDDMNLREELLRGIYGYGFEKPSAIQQ). Residues 61–231 (IIPCVRGRDV…RCFMRDPVSI (171 aa)) enclose the Helicase ATP-binding domain. An ATP-binding site is contributed by 74-81 (AQSGTGKT). A DEAD box motif is present at residues 179–182 (DEAD). Residues 242-403 (GIKQFYVNVK…EMPANIADLI (162 aa)) enclose the Helicase C-terminal domain.

The protein belongs to the DEAD box helicase family. eIF4A subfamily. In terms of assembly, eIF4F is a multi-subunit complex, the composition of which varies with external and internal environmental conditions. It is composed of at least eIF4A, eIF4E1 and eIF4G1. Interacts with tud and vas. Interacts (via multiple contacts) with bam; the interaction is direct.

The protein localises to the cytoplasm. It localises to the cytoplasmic ribonucleoprotein granule. It catalyses the reaction ATP + H2O = ADP + phosphate + H(+). ATP-dependent RNA helicase which is a subunit of the eIF4F complex involved in cap recognition and is required for mRNA binding to ribosome. In the current model of translation initiation, eIF4A unwinds RNA secondary structures in the 5'-UTR of mRNAs which is necessary to allow efficient binding of the small ribosomal subunit, and subsequent scanning for the initiator codon. As a result, promotes cell proliferation and growth. Binds and antagonises the bam-bgcn complex; probably prevents bam mediated translational repression of shg/E-cadherin. Involved in germ cell formation. Involved in germline stem cell maintenance and proliferation; prevents differentiation. In Drosophila melanogaster (Fruit fly), this protein is Eukaryotic initiation factor 4A.